The sequence spans 843 residues: Protein P (843 aa).

A terminal protein domain (TP) region spans residues M1 to Q177. Residues E178–L346 form a spacer region. The interval E347–Q690 is polymerase/reverse transcriptase domain (RT). One can recognise a Reverse transcriptase domain in the interval E357–I600. Residues D429, D551, and D552 each coordinate Mg(2+).

The protein belongs to the hepadnaviridae P protein family.

The enzyme catalyses DNA(n) + a 2'-deoxyribonucleoside 5'-triphosphate = DNA(n+1) + diphosphate. The catalysed reaction is Endonucleolytic cleavage to 5'-phosphomonoester.. Its activity is regulated as follows. Activated by host HSP70 and HSP40 in vitro to be able to bind the epsilon loop of the pgRNA. Because deletion of the RNase H region renders the protein partly chaperone-independent, the chaperones may be needed indirectly to relieve occlusion of the RNA-binding site by this domain. Inhibited by several reverse-transcriptase inhibitors: Lamivudine, Adefovir and Entecavir. Functionally, multifunctional enzyme that converts the viral RNA genome into dsDNA in viral cytoplasmic capsids. This enzyme displays a DNA polymerase activity that can copy either DNA or RNA templates, and a ribonuclease H (RNase H) activity that cleaves the RNA strand of RNA-DNA heteroduplexes in a partially processive 3'- to 5'-endonucleasic mode. Neo-synthesized pregenomic RNA (pgRNA) are encapsidated together with the P protein, and reverse-transcribed inside the nucleocapsid. Initiation of reverse-transcription occurs first by binding the epsilon loop on the pgRNA genome, and is initiated by protein priming, thereby the 5'-end of (-)DNA is covalently linked to P protein. Partial (+)DNA is synthesized from the (-)DNA template and generates the relaxed circular DNA (RC-DNA) genome. After budding and infection, the RC-DNA migrates in the nucleus, and is converted into a plasmid-like covalently closed circular DNA (cccDNA). The activity of P protein does not seem to be necessary for cccDNA generation, and is presumably released from (+)DNA by host nuclear DNA repair machinery. This Hepatitis B virus genotype C subtype adr (isolate Japan/Nishioka/1983) (HBV-C) protein is Protein P.